We begin with the raw amino-acid sequence, 311 residues long: tRNA dimethylallyltransferase (311 aa).

9–16 (GPTAVGKT) contributes to the ATP binding site. A substrate-binding site is contributed by 11–16 (TAVGKT). An interaction with substrate tRNA region spans residues 34-37 (DSMQ).

It belongs to the IPP transferase family. In terms of assembly, monomer. Mg(2+) is required as a cofactor.

It catalyses the reaction adenosine(37) in tRNA + dimethylallyl diphosphate = N(6)-dimethylallyladenosine(37) in tRNA + diphosphate. Catalyzes the transfer of a dimethylallyl group onto the adenine at position 37 in tRNAs that read codons beginning with uridine, leading to the formation of N6-(dimethylallyl)adenosine (i(6)A). The polypeptide is tRNA dimethylallyltransferase (Clostridium botulinum (strain Okra / Type B1)).